Consider the following 377-residue polypeptide: MMPLFNVLRSARMLPAVSKKVVSPPMMLRSVRELTNQSKNVYATKEVIIGASQKKKRSWVKWLSVSTLIIGGASYVGYLFTPDWREIVDSKHYYSNWKIRVYLSLPFNTASRVIGGLANQEIPVWLREHLLGGFARMYDCRMDDCVDPDFKNYPSFAAFFNRKLKESTRPISASPLVSPADGTVLHFGKVEDNKIEYVKGHDYDVDKFLGDVDLPQKDELDLYQVVIYLAPGDYHAFHSPARWVANQCRHVPGLLLSVRPTLLSHVPHLFCLNERVVLNGSWRHGFFSMSAVAATNVGDIVVDAEPSLRTNIVRRKTQKIMNTETEIHAPYVSGERVGEFRLGSTIVLVFQAPPTIKFAIKAGDPLRYGQSLVADGV.

The N-terminal 34 residues, 1-34, are a transit peptide targeting the mitochondrion; the sequence is MMPLFNVLRSARMLPAVSKKVVSPPMMLRSVREL. The Mitochondrial matrix portion of the chain corresponds to 35–61; that stretch reads TNQSKNVYATKEVIIGASQKKKRSWVK. The helical transmembrane segment at 62 to 80 threads the bilayer; sequence WLSVSTLIIGGASYVGYLF. Over 81–377 the chain is Mitochondrial intermembrane; that stretch reads TPDWREIVDS…YGQSLVADGV (297 aa). Catalysis depends on charge relay system; for autoendoproteolytic cleavage activity residues D181, H238, and S344. S344 functions as the Schiff-base intermediate with substrate; via pyruvic acid; for decarboxylase activity in the catalytic mechanism. S344 carries the post-translational modification Pyruvic acid (Ser); by autocatalysis.

It belongs to the phosphatidylserine decarboxylase family. PSD-B subfamily. Eukaryotic type I sub-subfamily. Heterodimer of a large membrane-associated beta subunit and a small pyruvoyl-containing alpha subunit. It depends on pyruvate as a cofactor. In terms of processing, is synthesized initially as an inactive proenzyme. Formation of the active enzyme involves a self-maturation process in which the active site pyruvoyl group is generated from an internal serine residue via an autocatalytic post-translational modification. Two non-identical subunits are generated from the proenzyme in this reaction, and the pyruvate is formed at the N-terminus of the alpha chain, which is derived from the carboxyl end of the proenzyme. The autoendoproteolytic cleavage occurs by a canonical serine protease mechanism, in which the side chain hydroxyl group of the serine supplies its oxygen atom to form the C-terminus of the beta chain, while the remainder of the serine residue undergoes an oxidative deamination to produce ammonia and the pyruvoyl prosthetic group on the alpha chain. During this reaction, the Ser that is part of the protease active site of the proenzyme becomes the pyruvoyl prosthetic group, which constitutes an essential element of the active site of the mature decarboxylase.

Its subcellular location is the mitochondrion inner membrane. It catalyses the reaction a 1,2-diacyl-sn-glycero-3-phospho-L-serine + H(+) = a 1,2-diacyl-sn-glycero-3-phosphoethanolamine + CO2. It functions in the pathway phospholipid metabolism; phosphatidylethanolamine biosynthesis; phosphatidylethanolamine from CDP-diacylglycerol: step 2/2. In terms of biological role, catalyzes the formation of phosphatidylethanolamine (PtdEtn) from phosphatidylserine (PtdSer). Plays a central role in phospholipid metabolism and in the interorganelle trafficking of phosphatidylserine. The sequence is that of Phosphatidylserine decarboxylase proenzyme, mitochondrial from Caenorhabditis elegans.